A 262-amino-acid chain; its full sequence is MAKDVITRALLRPIYKIYEKILWSQIKDGPFPFHVGIIPDGNRRWARNNRLPLDQGYYTGYVKLRDVLTWILEIGISTVTVFALSAENCEKRTQQELSMIFKYLKIGLDELLTSDLVHKYQVRVKAIGMLDKLPEDLKKLVVDLESTTEKYNKKKLILAICYGGRQEILDAIRKIMNDYKLGIIDSKSIDESTFRKYLYDQELSDIDLLIRSSGEIRISNFLLWHLAYSELFFVDVYWPDFRKIDLWRAIRSFQKRKRNFGA.

Residue aspartate 40 is part of the active site. Position 40 (aspartate 40) interacts with Mg(2+). Residues 41–44 (GNRR), tryptophan 45, and 85–87 (SAE) each bind substrate. Catalysis depends on asparagine 88, which acts as the Proton acceptor. Residues arginine 92, arginine 211, and 217–219 (RIS) contribute to the substrate site. Glutamate 230 contributes to the Mg(2+) binding site.

The protein belongs to the UPP synthase family. In terms of assembly, homodimer. Mg(2+) serves as cofactor.

The enzyme catalyses geranylgeranyl diphosphate + 7 isopentenyl diphosphate = tri-trans,hepta-cis-undecaprenyl diphosphate + 7 diphosphate. Generates tritrans,heptacis-undecaprenyl diphosphate from isopentenyl pyrophosphate (IPP) and geranylgeranyl diphosphate. It is probably the precursor of glycosyl carrier lipids. The chain is Tritrans,polycis-undecaprenyl-diphosphate synthase (GGDP specific) (uppS) from Sulfolobus acidocaldarius (strain ATCC 33909 / DSM 639 / JCM 8929 / NBRC 15157 / NCIMB 11770).